A 527-amino-acid polypeptide reads, in one-letter code: NADH-ubiquinone oxidoreductase chain 5 (527 aa).

14 helical membrane passes run 3 to 23 (ISIFLIGFVFFMGGISVWLMP), 43 to 63 (FYFNSILFSFILFLVTFSVLV), 75 to 95 (FNYYYFVLLIFVGSMFSLNFS), 98 to 118 (IFTMLLSWDLLGISSFFLVLF), 141 to 161 (FMFVFFGLSVFSGYYFLSFSM), 168 to 188 (LLLLLTAFTKSAQFPFSSWLP), 197 to 217 (VSSLVHSSTLVTAGLILLMNF), 226 to 246 (FISFVLIIGLFTMFFSSLASL), 263 to 283 (MGFSMVTLGLGLSFISFIHLV), 318 to 338 (LPNFIQLQMLVTLFCLCGLIF), 357 to 377 (YMMFFSLMFFVSVFLTFGYSF), 398 to 418 (VFMNFLSLVLVIFSISFLWWM), 432 to 452 (VDFFGPLVFLFMMIFLSFLIL), and 507 to 527 (YLKSLNFNSVVVLIFIFFMIC).

Belongs to the complex I subunit 5 family.

The protein resides in the mitochondrion inner membrane. It carries out the reaction a ubiquinone + NADH + 5 H(+)(in) = a ubiquinol + NAD(+) + 4 H(+)(out). In terms of biological role, core subunit of the mitochondrial membrane respiratory chain NADH dehydrogenase (Complex I) that is believed to belong to the minimal assembly required for catalysis. Complex I functions in the transfer of electrons from NADH to the respiratory chain. The immediate electron acceptor for the enzyme is believed to be ubiquinone. The sequence is that of NADH-ubiquinone oxidoreductase chain 5 from Caenorhabditis elegans.